We begin with the raw amino-acid sequence, 180 residues long: MPVRPARCYKRIKGPPYTREEYIHGAPMIQIPKFDMGTTSAAARTAFTMTAKLVVEERGQIRMQALEAARQMASKYLTKYVGDANYYLRLNVVPHHVLRENRMLAMAGADRLQEGMRLAFGSPAGRAARVEPGQVLFYAEFKPEHLPHIKEALRRAASKLPLPTRIVIEPKGNGGNKTVT.

It belongs to the universal ribosomal protein uL16 family.

The chain is Large ribosomal subunit protein uL16 from Pyrobaculum aerophilum (strain ATCC 51768 / DSM 7523 / JCM 9630 / CIP 104966 / NBRC 100827 / IM2).